The following is a 256-amino-acid chain: Small ribosomal subunit protein eS1 (256 aa).

Basic residues predominate over residues 1–18 (MAVGKNKRLSKGKKGVKK). The disordered stretch occupies residues 1–21 (MAVGKNKRLSKGKKGVKKRTV). Alanine 2 is modified (N-acetylalanine; partial).

It belongs to the eukaryotic ribosomal protein eS1 family. As to quaternary structure, component of the small ribosomal subunit. Mature ribosomes consist of a small (40S) and a large (60S) subunit. The 40S subunit contains about 33 different proteins and 1 molecule of RNA (18S). The 60S subunit contains about 49 different proteins and 3 molecules of RNA (25S, 5.8S and 5S).

The protein localises to the cytoplasm. This is Small ribosomal subunit protein eS1 (rps1) from Aspergillus niger (strain ATCC MYA-4892 / CBS 513.88 / FGSC A1513).